Consider the following 258-residue polypeptide: Protease HtpX homolog (258 aa).

Helical transmembrane passes span 24–44 (VLLF…LGLG) and 45–65 (GPLF…LISP). Zn(2+) is bound at residue H146. The active site involves E147. Residue H150 coordinates Zn(2+). 2 helical membrane-spanning segments follow: residues 157 to 177 (IVMT…WSTV) and 186 to 206 (LVGI…LFIS). Residue E210 coordinates Zn(2+).

Belongs to the peptidase M48B family. The cofactor is Zn(2+).

It localises to the cell membrane. This Methanothermobacter thermautotrophicus (strain ATCC 29096 / DSM 1053 / JCM 10044 / NBRC 100330 / Delta H) (Methanobacterium thermoautotrophicum) protein is Protease HtpX homolog.